The sequence spans 504 residues: DnaJ homolog subfamily C member 3 (504 aa).

The N-terminal stretch at 1–31 (MVAPGSVRSRLGAVFPFLLVLVDLQYEGAEC) is a signal peptide. 9 TPR repeats span residues 37-70 (VEKH…DPDN), 72-104 (IAYY…KMDF), 105-138 (TAAR…NPSE), 154-187 (MQRL…CVWD), 188-221 (AELR…KNDN), 222-255 (TEAF…DQDH), 268-301 (LNKL…EPSV), 306-339 (VRSK…EPDN), and 340-373 (VNAL…NEND). A disulfide bridge links cysteine 248 with cysteine 258. Residue serine 274 is modified to Phosphoserine. Residues cysteine 313 and cysteine 329 are joined by a disulfide bond. The interval 375 to 393 (QIREGLEKAQRLLKQSQKR) is flexible linker. A J domain is found at 394-462 (DYYKILGVKR…EMRRKFDDGE (69 aa)). A disordered region spans residues 451-481 (DPEMRRKFDDGEDPLDAETQQGGGSNPFHRS). At serine 475 the chain carries Phosphoserine.

Interacts with EIF2AK2 and EIF2AK3. Forms a trimeric complex with DNAJB1 and HSPA8. Interacts with THAP12.

The protein localises to the endoplasmic reticulum. Functionally, involved in the unfolded protein response (UPR) during ER stress. Co-chaperone of HSPA8/HSC70, it stimulates its ATPase activity. May inhibit both the autophosphorylation of EIF2AK2/PKR and the ability of EIF2AK2 to catalyze phosphorylation of the EIF2A. May inhibit EIF2AK3/PERK activity. The protein is DnaJ homolog subfamily C member 3 (Dnajc3) of Rattus norvegicus (Rat).